We begin with the raw amino-acid sequence, 71 residues long: SRY-related protein LG27 (71 aa).

The HMG box DNA-binding region spans Val1–Lys68.

Its subcellular location is the nucleus. The chain is SRY-related protein LG27 from Eublepharis macularius (Leopard gecko).